We begin with the raw amino-acid sequence, 117 residues long: MSWRGRSTYYWPRPRRYVQPPEMIGPMRPEQFSDEVEPATPEEGEPATQCQDPAAAQEGEDEGASAGQGPKPEAHSQEQGHPQTGCECEDGPDGQEMDPPNPEEVKTPEEGEKQSQC.

The tract at residues Met1–Cys117 is disordered. Acidic residues-rich tracts occupy residues Phe32–Glu45 and Glu87–Glu96. A compositionally biased stretch (basic and acidic residues) spans Glu103 to Cys117.

This sequence belongs to the GAGE family.

The polypeptide is G antigen 12B/C/D/E (GAGE12B) (Homo sapiens (Human)).